A 786-amino-acid polypeptide reads, in one-letter code: MGLQPLEFSDCYLDSPWFRERIRAHEAELERTNKFIKELIKDGKNLIAATKSLSVAQRKFAHSLRDFKFEFIGDAVTDDERCIDASLREFSNFLKNLEEQREIMALSVTETLIKPLEKFRKEQLGAVKEEKKKFDKETEKNYSLIDKHLNLSAKKKDSHLQEADIQVEQNRQHFYELSLEYVCKLQEIQERKKFEFVEPMLSFFQGMFTFYHQGHELAKDFNHYKMELQINIQNTRNRFEGTRSEVEELMNKIRQNPKDHKRASQFTAEGYLYVQEKRPAPFGSSWVKHYCMYRKAAKKFNMIPFEHRSGGKLGDGEVFFLKECTKRHTDSIDRRFCFDIEAADRPGVSLTMQAFSEEERKQWLEALGGKEALSHSFNTAIIPRPEGNAQLDKMGFTIIRKCISAVETRGINDQGLYRVVGVSSKVQRLLSMLMDVKTCNEVDLENSADWEVKTITSALKQYLRSLPEPLMTYELHGDFIVPAKSGSPESRVNAIHFLVHKLPEKNKEMLDILVKHLTNVSNHSKQNLMTVANLGVVFGPTLMRPQEETVAALMDLKFQNIVVEILIENHEKIFRTPPDTTFPEPTCLSASPPNAPPRQSKRQGQRTKRPVAVYNLCLELEDGDNPYPSKEDTPTSSLDSLSSPSPVTTAVPGPPGPDKNHLLADGGSFGDWASTIPGQTRSSMVQWLNPQSPTTTSSNSAVTPLSPGSSPFPFSPPATVADKPPESIRSRKARAVYPCEAEHSSELSFEIGAIFEDVQTSREPGWLEGTLNGKRGLIPQNYVKLL.

The BAR domain occupies 7–262 (EFSDCYLDSP…IRQNPKDHKR (256 aa)). The 108-residue stretch at 265–372 (QFTAEGYLYV…WLEALGGKEA (108 aa)) folds into the PH domain. In terms of domain architecture, Rho-GAP spans 389 to 574 (AQLDKMGFTI…ILIENHEKIF (186 aa)). Disordered regions lie at residues 576-608 (TPPDTTFPEPTCLSASPPNAPPRQSKRQGQRTK) and 621-727 (EDGD…PPES). The segment covering 599–608 (QSKRQGQRTK) has biased composition (basic residues). Low complexity predominate over residues 634–651 (PTSSLDSLSSPSPVTTAV). A compositionally biased stretch (polar residues) spans 676-688 (IPGQTRSSMVQWL). A compositionally biased stretch (low complexity) spans 689–712 (NPQSPTTTSSNSAVTPLSPGSSPF). Residues 728-786 (IRSRKARAVYPCEAEHSSELSFEIGAIFEDVQTSREPGWLEGTLNGKRGLIPQNYVKLL) form the SH3 domain.

Interacts with PKN3. Interacts with caspase-activated PAK2 proteolytic fragment PAK-2p34; the interaction does not affect GRAF2/ARHGAP10 GTPase activation activity towards RHOA and CDC42. Interacts via its SH3 domain with PTK2/FAK1. Interacts with PTK2B/PYK2; the interaction negatively regulates GRAF2/ARHGAP10 GTPase-activating activity. Interacts with MICAL1 and WDR44; complex formation might transit from GRAF2/ARHGAP10-MICAL1 to GRAF2/ARHGAP10-WDR44 complexes. Phosphorylated. Phosphorylated in vitro by constitutive active PKN3. As to expression, high levels of expression in heart and skeletal muscle.

It localises to the cytoplasm. The protein resides in the perinuclear region. Its subcellular location is the cell membrane. It is found in the endosome membrane. In terms of biological role, GTPase-activating protein that catalyzes the conversion of active GTP-bound Rho GTPases to their inactive GDP-bound form, thus suppressing various Rho GTPase-mediated cellular processes. Also converts Cdc42 to an inactive GDP-bound state. Essential for PTKB2 regulation of cytoskeletal organization via Rho family GTPases. Inhibits PAK2 proteolytic fragment PAK-2p34 kinase activity and changes its localization from the nucleus to the perinuclear region. Stabilizes PAK-2p34 thereby increasing stimulation of cell death. Associates with MICAL1 on the endosomal membrane to promote Rab8-Rab10-dependent tubule extension. After dissociation with MICAL1, recruits WDR44 which connects the endoplasmic reticulum (ER) with the endosomal tubule, thereby participating in the export of a subset of neosynthesized proteins. In Homo sapiens (Human), this protein is Rho GTPase-activating protein 10 (ARHGAP10).